The following is a 319-amino-acid chain: Structure-specific endonuclease subunit SLX1 (319 aa).

Residues 20-103 (TFYCCYLLQS…QHGYKTHYIP (84 aa)) enclose the GIY-YIG domain. The SLX1-type zinc finger occupies 233-297 (CNLCGQCYDY…LPNFCMCPGC (65 aa)).

This sequence belongs to the SLX1 family. As to quaternary structure, forms a heterodimer with SLX4. It depends on a divalent metal cation as a cofactor.

It is found in the nucleus. Functionally, catalytic subunit of the SLX1-SLX4 structure-specific endonuclease that resolves DNA secondary structures generated during DNA repair and recombination. Has endonuclease activity towards branched DNA substrates, introducing single-strand cuts in duplex DNA close to junctions with ss-DNA. This Vanderwaltozyma polyspora (strain ATCC 22028 / DSM 70294 / BCRC 21397 / CBS 2163 / NBRC 10782 / NRRL Y-8283 / UCD 57-17) (Kluyveromyces polysporus) protein is Structure-specific endonuclease subunit SLX1.